The chain runs to 172 residues: NAD(P)H-quinone oxidoreductase subunit J (172 aa).

Belongs to the complex I 30 kDa subunit family. NDH-1 can be composed of about 15 different subunits; different subcomplexes with different compositions have been identified which probably have different functions.

Its subcellular location is the cellular thylakoid membrane. The catalysed reaction is a plastoquinone + NADH + (n+1) H(+)(in) = a plastoquinol + NAD(+) + n H(+)(out). It carries out the reaction a plastoquinone + NADPH + (n+1) H(+)(in) = a plastoquinol + NADP(+) + n H(+)(out). In terms of biological role, NDH-1 shuttles electrons from an unknown electron donor, via FMN and iron-sulfur (Fe-S) centers, to quinones in the respiratory and/or the photosynthetic chain. The immediate electron acceptor for the enzyme in this species is believed to be plastoquinone. Couples the redox reaction to proton translocation, and thus conserves the redox energy in a proton gradient. Cyanobacterial NDH-1 also plays a role in inorganic carbon-concentration. The protein is NAD(P)H-quinone oxidoreductase subunit J of Synechococcus sp. (strain ATCC 27144 / PCC 6301 / SAUG 1402/1) (Anacystis nidulans).